Consider the following 96-residue polypeptide: C-C motif chemokine 20 (96 aa).

The first 26 residues, Met1 to Ala26, serve as a signal peptide directing secretion. 2 disulfide bridges follow: Cys31/Cys58 and Cys32/Cys74.

The protein belongs to the intercrine beta (chemokine CC) family. In terms of tissue distribution, low levels in thymus and lung.

It localises to the secreted. Functionally, acts as a ligand for C-C chemokine receptor CCR6. Signals through binding and activation of CCR6 and induces a strong chemotactic response and mobilization of intracellular calcium ions. The ligand-receptor pair CCL20-CCR6 is responsible for the chemotaxis of dendritic cells (DC), effector/memory T-cells and B-cells and plays an important role at skin and mucosal surfaces under homeostatic and inflammatory conditions, as well as in pathology, including cancer and autoimmune diseases. CCL20 acts as a chemotactic factor that attracts lymphocytes and, slightly, neutrophils, but not monocytes. Involved in the recruitment of both the pro-inflammatory IL17 producing helper T-cells (Th17) and the regulatory T-cells (Treg) to sites of inflammation. Required for optimal migration of thymic natural regulatory T cells (nTregs) and DN1 early thymocyte progenitor cells. Positively regulates sperm motility and chemotaxis via its binding to CCR6 which triggers Ca2+ mobilization in the sperm which is important for its motility. May be involved in formation and function of the mucosal lymphoid tissues by attracting lymphocytes and dendritic cells towards epithelial cells. This Rattus norvegicus (Rat) protein is C-C motif chemokine 20 (Ccl20).